The following is a 20-amino-acid chain: U27-ctenitoxin-Pn1a (20 aa).

The disordered stretch occupies residues 1–20 (LAKRADICQPGKTSQRACET). A compositionally biased stretch (polar residues) spans 11-20 (GKTSQRACET).

In terms of processing, contains 4 disulfide bonds. As to expression, expressed by the venom gland.

Its subcellular location is the secreted. Has a vascular smooth muscle contracting activity. Causes short-lived contractions of both arterial and venous rabbit vessels. The chain is U27-ctenitoxin-Pn1a from Phoneutria nigriventer (Brazilian armed spider).